Here is a 350-residue protein sequence, read N- to C-terminus: Purine-rich element-binding protein gamma (350 aa).

Disordered stretches follow at residues 1–59 (MERA…GTSE) and 136–172 (GHRQ…HPHS). Over residues 9–27 (GGGSGGGRGRGGKNVGGPG) the composition is skewed to gly residues. A compositionally biased stretch (polar residues) spans 47 to 59 (ASATPNQSGGTSE). The DNA-binding element occupies 54 to 296 (SGGTSEIQEL…GIFLKVSEVR (243 aa)). Positions 137-149 (HRQEHGQSKEQVS) are enriched in basic and acidic residues. Residues serine 163, serine 166, and serine 342 each carry the phosphoserine modification.

Belongs to the PUR DNA-binding protein family. In terms of tissue distribution, isoform 1 is expressed in testis. Isoform 2 is expressed in blastocyst and kidney.

The protein localises to the nucleus. This Mus musculus (Mouse) protein is Purine-rich element-binding protein gamma (Purg).